Here is a 200-residue protein sequence, read N- to C-terminus: Protein OPI10 homolog (200 aa).

It belongs to the OPI10 family.

The protein localises to the cytoplasm. It localises to the nucleus envelope. This is Protein OPI10 homolog from Schizosaccharomyces pombe (strain 972 / ATCC 24843) (Fission yeast).